The following is a 290-amino-acid chain: Ribosomal RNA small subunit methyltransferase A (290 aa).

Positions 28, 30, 55, 76, 102, and 126 each coordinate S-adenosyl-L-methionine.

This sequence belongs to the class I-like SAM-binding methyltransferase superfamily. rRNA adenine N(6)-methyltransferase family. RsmA subfamily.

It localises to the cytoplasm. The catalysed reaction is adenosine(1518)/adenosine(1519) in 16S rRNA + 4 S-adenosyl-L-methionine = N(6)-dimethyladenosine(1518)/N(6)-dimethyladenosine(1519) in 16S rRNA + 4 S-adenosyl-L-homocysteine + 4 H(+). Its function is as follows. Specifically dimethylates two adjacent adenosines (A1518 and A1519) in the loop of a conserved hairpin near the 3'-end of 16S rRNA in the 30S particle. May play a critical role in biogenesis of 30S subunits. The chain is Ribosomal RNA small subunit methyltransferase A from Lachnoclostridium phytofermentans (strain ATCC 700394 / DSM 18823 / ISDg) (Clostridium phytofermentans).